Consider the following 703-residue polypeptide: Cyclomaltodextrin glucanotransferase (703 aa).

Residues 1–29 (MNDLNDFLKTILLSFIFFLLLSLPTVAEA) form the signal peptide. The segment at 30-160 (DVTNKVNYSK…GIKVIMDFTP (131 aa)) is A1. Ca(2+) contacts are provided by aspartate 52, asparagine 54, asparagine 57, and asparagine 58. Cysteine 68 and cysteine 75 are joined by a disulfide. Ca(2+)-binding residues include glycine 76 and aspartate 78. 122 to 123 (YW) lines the substrate pocket. A Ca(2+)-binding site is contributed by asparagine 161. The interval 161-224 (NHSSPALETN…NLYDLADYDL (64 aa)) is b. Histidine 162 provides a ligand contact to substrate. A Ca(2+)-binding site is contributed by isoleucine 212. 215–218 (NLYD) contacts substrate. Residue aspartate 221 coordinates Ca(2+). An A2 region spans residues 225 to 428 (NNTVMDQYLK…LRQTNSALGY (204 aa)). A substrate-binding site is contributed by arginine 249. Aspartate 251 acts as the Nucleophile in catalysis. Substrate is bound at residue 254–255 (KH). Histidine 255 lines the Ca(2+) pocket. Glutamate 279 serves as the catalytic Proton donor. Substrate contacts are provided by histidine 349, aspartate 393, and arginine 397. The c stretch occupies residues 429 to 516 (GTTTERWLNE…SVAVWQVSNP (88 aa)). The interval 517–600 (STSPLIGQVG…SPTYKEFEVL (84 aa)) is d. The region spanning 520-598 (PLIGQVGPMM…IKSPTYKEFE (79 aa)) is the IPT/TIG domain. The region spanning 599–703 (VLSGNQVSVR…TGTDTVMINW (105 aa)) is the CBM20 domain. Residues 601-703 (SGNQVSVRFG…TGTDTVMINW (103 aa)) are e.

Belongs to the glycosyl hydrolase 13 family. In terms of assembly, monomer. Requires Ca(2+) as cofactor.

The protein resides in the secreted. It catalyses the reaction Cyclizes part of a (1-&gt;4)-alpha-D-glucan chain by formation of a (1-&gt;4)-alpha-D-glucosidic bond.. The sequence is that of Cyclomaltodextrin glucanotransferase (cgt) from Bacillus sp. (strain 1-1).